The sequence spans 460 residues: Transcriptional regulatory protein UME1 (460 aa).

An NEE-box motif is present at residues 14-22 (NEEFKIWKK). WD repeat units lie at residues 233–271 (PGIKNIQEIKFLNNQIFATCSDDGIIRFWGNEIGKKPLW), 276–316 (SLDG…ALGD), 339–379 (FYSE…AIYN), and 411–451 (GENN…VLDG).

In terms of assembly, component of the RPD3C(L) complex composed of at least ASH1, CTI6, DEP1, PHO23, RPD3, RXT2, RXT3, SAP30, SDS3, SIN3, UME1 and UME6. Component of the RPD3C(S) complex composed of at least EAF3, RCO1, RPD3, SIN3, and UME1. Interacts with RPD3.

The protein localises to the cytoplasm. Its subcellular location is the nucleus. Functionally, catalytic component of the RPD3 histone deacetylase complexes RPD3C(L) and RPD3C(S) responsible for the deacetylation of lysine residues on the N-terminal part of the core histones (H2A, H2B, H3 and H4). Histone deacetylation gives a tag for epigenetic repression and plays an important role in transcriptional regulation, cell cycle progression and developmental events. The protein is Transcriptional regulatory protein UME1 (UME1) of Saccharomyces cerevisiae (strain ATCC 204508 / S288c) (Baker's yeast).